Here is a 505-residue protein sequence, read N- to C-terminus: MNVFLMFSLLFLAALGSCADDRNPLEECFRETDYEEFLEIARNGLKKTSNPKHVVIVGAGMSGLSAAYVLAGAGHQVTVLEASERAGGRVRTYRNDKEGWYANLGPMRLPEKHRIVREYIRKFGLQLNEFSQENDNAWHFIKNIRKRVGEVKKDPGVLKYPVKPSEEGKSAGQLYEESLRKVEKELKRTNCSYILNKYDTYSTKEYLIKEGNLSPGAVDMIGDLLNEDSGYYVSFIESMKHDDIFAYEKRFDEIVGGMDQLPTSMYQAIEEKVRFNTRVIKIQQNAKKVTVTYQTPAKDTSLVTADYVIVCTTSRAARRINFRPPLPPKKAHALRSVHYRSGTKIFLTCTKKFWEDDGIHGGKSTTDLPSRFIYYPNHNFTSGVGVIIAYGIGDDANFFQALDFKSCADIVMNDLSLIHQLPKKDIQAFCYPSMIQKWSLDKYAMGGITTFTPYQFQHFSEALTAPVGRIFFAGEYTAHAHGWIDSTIKSGLTAARDVNRASENP.

A signal peptide spans Met-1–Cys-18. Cysteines 28 and 191 form a disulfide. FAD is bound by residues Met-61–Ser-62, Glu-81–Ala-82, Arg-89, and Gly-105–Arg-108. Arg-108 contributes to the substrate binding site. Asn-190 is a glycosylation site (N-linked (GlcNAc...) asparagine). His-241 is a substrate binding site. Val-279 is a binding site for FAD. Cysteines 349 and 430 form a disulfide. Asn-379 carries an N-linked (GlcNAc...) asparagine glycan. Position 390 (Tyr-390) interacts with substrate. Residues Glu-475 and Gly-482 to Thr-487 contribute to the FAD site. Gly-482–Trp-483 contacts substrate.

It belongs to the flavin monoamine oxidase family. FIG1 subfamily. As to quaternary structure, monomer. This is in contrast with most of its orthologs, that are non-covalently linked homodimers. It depends on FAD as a cofactor. N-glycosylated. As to expression, expressed by the venom gland.

It is found in the secreted. It carries out the reaction an L-alpha-amino acid + O2 + H2O = a 2-oxocarboxylate + H2O2 + NH4(+). The catalysed reaction is L-leucine + O2 + H2O = 4-methyl-2-oxopentanoate + H2O2 + NH4(+). In terms of biological role, catalyzes an oxidative deamination of predominantly hydrophobic and aromatic L-amino acids, thus producing hydrogen peroxide that may contribute to the diverse toxic effects of this enzyme. Shows activity on L-Leu. Exhibits diverse biological activities, such as hemorrhage, edema, antibacterial and antiparasitic activities, as well as regulation of platelet aggregation. Effects of snake L-amino oxidases on platelets are controversial, since they either induce aggregation or inhibit agonist-induced aggregation. These different effects are probably due to different experimental conditions. This protein has an ability to induce hemolysis and apoptosis. This Protobothrops flavoviridis (Habu) protein is L-amino-acid oxidase.